A 333-amino-acid polypeptide reads, in one-letter code: MELIVKEESKTDYNYGSDPYKRDIKTLLNTGLVVIDKPSGPTSHEVAAWVRNMLNLVKAGHGGTLDPKVTGALPVALGNTTKCVPIWHIPPKEYVCLMHLHDDAKLEDIENIFKEFTGRIHQRPPLKAAVKRSLRIRKIYEIEILEIDGRDILFRTKCQSGTYLRKLVDDMGEALGTSAHMQELRRTISGPFYENEAVYLQDLLDAYIFWKEDGNEEELRKLVKPLEYGLQHLKKIIVKDSAVDAVCHGATLYSSGVSKIEKGIGTDEVVLIETLKGEAVAVGKPLMNTKDMLKTEEGEVVEITRVIMEPGIYPRIWKKRNKNDKTKAESKKK.

Catalysis depends on aspartate 66, which acts as the Nucleophile. The PUA domain occupies 233–308; the sequence is LKKIIVKDSA…EVVEITRVIM (76 aa).

This sequence belongs to the pseudouridine synthase TruB family. Type 2 subfamily.

The enzyme catalyses uridine(55) in tRNA = pseudouridine(55) in tRNA. Could be responsible for synthesis of pseudouridine from uracil-55 in the psi GC loop of transfer RNAs. This Methanococcus maripaludis (strain C7 / ATCC BAA-1331) protein is Probable tRNA pseudouridine synthase B.